Reading from the N-terminus, the 120-residue chain is Cell division topological specificity factor (120 aa).

Positions 93-120 (LNSCEGENPQQDPGAAPSEGGHLSSPSP) are disordered.

Belongs to the MinE family.

Prevents the cell division inhibition by proteins MinC and MinD at internal division sites while permitting inhibition at polar sites. This ensures cell division at the proper site by restricting the formation of a division septum at the midpoint of the long axis of the cell. The protein is Cell division topological specificity factor of Synechococcus sp. (strain JA-3-3Ab) (Cyanobacteria bacterium Yellowstone A-Prime).